The sequence spans 169 residues: MTRVPARSGRHDEQTLLRTIATTPRAPVGVRGDLATAIDALRRPERRRGMAVIISDFLGPINWQRPLGAIAARHEVLAIEVLDPRDVELPDIGDVVLQDAETGVTREFTIDAQLRDDFAKAAAAHRADVARTIRSCGAPILTLRTDRDWIADIVRFVKSRRRGALAGRQ.

It to M.tuberculosis Rv1480.

This is an uncharacterized protein from Mycobacterium avium.